Reading from the N-terminus, the 70-residue chain is Protein SlyX homolog (70 aa).

A disordered region spans residues 51-70 (RMREAEANRPGPTNEPPPHY).

It belongs to the SlyX family.

The polypeptide is Protein SlyX homolog (Nitrobacter hamburgensis (strain DSM 10229 / NCIMB 13809 / X14)).